Consider the following 198-residue polypeptide: ATP-dependent Clp protease proteolytic subunit (198 aa).

Residue serine 103 is the Nucleophile of the active site. Histidine 128 is an active-site residue.

The protein belongs to the peptidase S14 family. Fourteen ClpP subunits assemble into 2 heptameric rings which stack back to back to give a disk-like structure with a central cavity, resembling the structure of eukaryotic proteasomes.

It localises to the cytoplasm. The enzyme catalyses Hydrolysis of proteins to small peptides in the presence of ATP and magnesium. alpha-casein is the usual test substrate. In the absence of ATP, only oligopeptides shorter than five residues are hydrolyzed (such as succinyl-Leu-Tyr-|-NHMec, and Leu-Tyr-Leu-|-Tyr-Trp, in which cleavage of the -Tyr-|-Leu- and -Tyr-|-Trp bonds also occurs).. Its function is as follows. Cleaves peptides in various proteins in a process that requires ATP hydrolysis. Has a chymotrypsin-like activity. Plays a major role in the degradation of misfolded proteins. This chain is ATP-dependent Clp protease proteolytic subunit, found in Ruthia magnifica subsp. Calyptogena magnifica.